A 212-amino-acid polypeptide reads, in one-letter code: tRNA (guanine-N(7)-)-methyltransferase (212 aa).

The S-adenosyl-L-methionine site is built by Glu-44, Asp-69, Asp-96, and Asp-118. Asp-118 is a catalytic residue. Residue Lys-122 coordinates substrate. The segment at 124–129 is interaction with RNA; it reads RHEKRR. Substrate is bound by residues Asp-154 and 191-194; that span reads TEYE.

Belongs to the class I-like SAM-binding methyltransferase superfamily. TrmB family.

The catalysed reaction is guanosine(46) in tRNA + S-adenosyl-L-methionine = N(7)-methylguanosine(46) in tRNA + S-adenosyl-L-homocysteine. Its pathway is tRNA modification; N(7)-methylguanine-tRNA biosynthesis. Its function is as follows. Catalyzes the formation of N(7)-methylguanine at position 46 (m7G46) in tRNA. This is tRNA (guanine-N(7)-)-methyltransferase from Streptococcus suis (strain 05ZYH33).